The following is a 623-amino-acid chain: Leucine aminopeptidase 2 (623 aa).

A peptide-binding positions include 140–142 (QLE) and 266–271 (PYGGME). Zn(2+) is bound at residue H295. The Proton acceptor role is filled by E296. The Zn(2+) site is built by H299 and E318. Residue Y382 is the Proton donor of the active site.

This sequence belongs to the peptidase M1 family. Zn(2+) serves as cofactor.

Its subcellular location is the cytoplasm. The protein localises to the nucleus. It catalyses the reaction an epoxide + H2O = an ethanediol. In terms of biological role, aminopeptidase that preferentially cleaves di- and tripeptides. Also has low epoxide hydrolase activity (in vitro). Can hydrolyze the epoxide leukotriene LTA(4) but it forms preferentially 5,6-dihydroxy-7,9,11,14-eicosatetraenoic acid rather than the cytokine leukotriene B(4) as the product compared to the homologous mammalian enzyme (in vitro). The sequence is that of Leucine aminopeptidase 2 from Eremothecium gossypii (strain ATCC 10895 / CBS 109.51 / FGSC 9923 / NRRL Y-1056) (Yeast).